Here is a 274-residue protein sequence, read N- to C-terminus: Isoprenyl transferase (274 aa).

Residue Asp-49 is part of the active site. Asp-49 lines the Mg(2+) pocket. Residues 50 to 53 (GNRR), Phe-54, Arg-62, His-66, and 94 to 96 (STD) each bind substrate. Asn-97 functions as the Proton acceptor in the catalytic mechanism. Substrate contacts are provided by residues Arg-100, Arg-223, and 229 to 231 (RLS). Glu-242 contributes to the Mg(2+) binding site.

Belongs to the UPP synthase family. Homodimer. Requires Mg(2+) as cofactor.

In terms of biological role, catalyzes the condensation of isopentenyl diphosphate (IPP) with allylic pyrophosphates generating different type of terpenoids. The sequence is that of Isoprenyl transferase from Deinococcus radiodurans (strain ATCC 13939 / DSM 20539 / JCM 16871 / CCUG 27074 / LMG 4051 / NBRC 15346 / NCIMB 9279 / VKM B-1422 / R1).